We begin with the raw amino-acid sequence, 306 residues long: Serine/threonine-protein phosphatase PP2A-1 catalytic subunit (306 aa).

Mn(2+)-binding residues include D54, H56, D82, and N114. H115 serves as the catalytic Proton donor. Mn(2+) contacts are provided by H164 and H238.

The protein belongs to the PPP phosphatase family. PP-2A subfamily. Mn(2+) is required as a cofactor.

Its subcellular location is the cytoplasm. The enzyme catalyses O-phospho-L-seryl-[protein] + H2O = L-seryl-[protein] + phosphate. The catalysed reaction is O-phospho-L-threonyl-[protein] + H2O = L-threonyl-[protein] + phosphate. This Oryza sativa subsp. indica (Rice) protein is Serine/threonine-protein phosphatase PP2A-1 catalytic subunit (PP2A1).